The following is a 75-amino-acid chain: Sec-independent protein translocase protein TatA (75 aa).

The chain crosses the membrane as a helical span at residues 1–21; sequence MGSFSIWHWLIVLVIVVLVFG. 2 stretches are compositionally biased toward basic and acidic residues: residues 43–54 and 66–75; these read MRDSEKSGEDVQ and ATDKSHTVSH. Residues 43–75 are disordered; the sequence is MRDSEKSGEDVQQKIGGDTLDAQATDKSHTVSH.

The protein belongs to the TatA/E family. The Tat system comprises two distinct complexes: a TatABC complex, containing multiple copies of TatA, TatB and TatC subunits, and a separate TatA complex, containing only TatA subunits. Substrates initially bind to the TatABC complex, which probably triggers association of the separate TatA complex to form the active translocon.

The protein resides in the cell inner membrane. Functionally, part of the twin-arginine translocation (Tat) system that transports large folded proteins containing a characteristic twin-arginine motif in their signal peptide across membranes. TatA could form the protein-conducting channel of the Tat system. This Aromatoleum aromaticum (strain DSM 19018 / LMG 30748 / EbN1) (Azoarcus sp. (strain EbN1)) protein is Sec-independent protein translocase protein TatA.